Reading from the N-terminus, the 110-residue chain is U1-lycotoxin-Ls1kk (110 aa).

Positions 1–20 (MKFVLLFGVLLVTLFSYSSA) are cleaved as a signal peptide. Positions 21-44 (EMFDDFDQADEDELLSLIEKEEAR) are excised as a propeptide. 4 cysteine pairs are disulfide-bonded: Cys-47/Cys-62, Cys-54/Cys-71, Cys-61/Cys-89, and Cys-73/Cys-87.

Belongs to the neurotoxin 19 (CSTX) family. 03 subfamily. Expressed by the venom gland.

Its subcellular location is the secreted. In Lycosa singoriensis (Wolf spider), this protein is U1-lycotoxin-Ls1kk.